We begin with the raw amino-acid sequence, 575 residues long: Guanine nucleotide-binding protein-like 3-like protein (575 aa).

The segment covering 1–30 has biased composition (basic residues); that stretch reads MMKLRHKNKKPGKGSKGCKKPAKQNGKKAA. The tract at residues 1–75 is disordered; sequence MMKLRHKNKK…AAREQERHRR (75 aa). The tract at residues 9-28 is required for nucleolar localization; sequence KKPGKGSKGCKKPAKQNGKK. Over residues 42–72 the composition is skewed to basic and acidic residues; it reads SNDHASREAELKKKRVGEMREKQQAAREQER. Residues 51-79 are a coiled coil; sequence ELKKKRVGEMREKQQAAREQERHRRRTIE. Residues 118–303 form the CP-type G domain; that stretch reads YKEFHKVVEY…LLDAPGIVPG (186 aa). GTP contacts are provided by residues 166 to 169, 252 to 259, and 296 to 299; these read NKID, GLPNVGKS, and DAPG. Residue K470 forms a Glycyl lysine isopeptide (Lys-Gly) (interchain with G-Cter in SUMO1) linkage.

This sequence belongs to the TRAFAC class YlqF/YawG GTPase family. As to quaternary structure, interacts with MDM2; this interaction, which occurs in the nucleoplasm, stabilizes MDM2. Indirectly interacts with TP53, via MDM2-binding. Interacts with TERF1; this interaction probably occurs in the nucleoplasm and is increased during mitosis, when the nucleolus is disassembled. This binding may promote TERF1 homodimerization. Interacts with TERT.

The protein resides in the nucleus. Its subcellular location is the nucleolus. Functionally, stabilizes TERF1 telomeric association by preventing TERF1 recruitment by PML. Stabilizes TERF1 protein by preventing its ubiquitination and hence proteasomal degradation. Does so by interfering with TERF1-binding to FBXO4 E3 ubiquitin-protein ligase. Required for cell proliferation. By stabilizing TRF1 protein during mitosis, promotes metaphase-to-anaphase transition. Stabilizes MDM2 protein by preventing its ubiquitination, and hence proteasomal degradation. By acting on MDM2, may affect TP53 activity. Required for normal processing of ribosomal pre-rRNA. Binds GTP. In Bos taurus (Bovine), this protein is Guanine nucleotide-binding protein-like 3-like protein (GNL3L).